The chain runs to 102 residues: uncharacterized protein (102 aa).

In terms of domain architecture, HTH cro/C1-type spans 48–102; sequence LNDKRKSLGIELSMLELQTGVSISTLNRLFQDPSQVRFTTVFLVAQTLGVSLCAI. A DNA-binding region (H-T-H motif) is located at residues 59–78; the sequence is LSMLELQTGVSISTLNRLFQ.

This is an uncharacterized protein from Haemophilus influenzae (strain ATCC 51907 / DSM 11121 / KW20 / Rd).